A 214-amino-acid chain; its full sequence is Protein-L-isoaspartate O-methyltransferase (214 aa).

The active site involves serine 61.

The protein belongs to the methyltransferase superfamily. L-isoaspartyl/D-aspartyl protein methyltransferase family.

The protein resides in the cytoplasm. The enzyme catalyses [protein]-L-isoaspartate + S-adenosyl-L-methionine = [protein]-L-isoaspartate alpha-methyl ester + S-adenosyl-L-homocysteine. In terms of biological role, catalyzes the methyl esterification of L-isoaspartyl residues in peptides and proteins that result from spontaneous decomposition of normal L-aspartyl and L-asparaginyl residues. It plays a role in the repair and/or degradation of damaged proteins. This Paramagnetospirillum magneticum (strain ATCC 700264 / AMB-1) (Magnetospirillum magneticum) protein is Protein-L-isoaspartate O-methyltransferase.